We begin with the raw amino-acid sequence, 571 residues long: Mannan endo-1,4-beta-mannosidase B (571 aa).

The signal sequence occupies residues 1–19 (MNSLSLLLFCIFFVFSTFA). Positions 22 to 141 (VYYEAENGKL…WMWVDAFVIN (120 aa)) constitute a CBM6 domain. The GH26 domain occupies 165–459 (PAAKKLYDFL…FTHKTVMNMD (295 aa)). W286 provides a ligand contact to substrate. The active-site Proton donor is E319. Residues W324 and Y379 each coordinate substrate. E407 acts as the Nucleophile in catalysis. CBM10 domains lie at 491–527 (ECFS…CGIG) and 534–571 (VCWS…CGII).

This sequence belongs to the glycosyl hydrolase 26 family.

The enzyme catalyses Random hydrolysis of (1-&gt;4)-beta-D-mannosidic linkages in mannans, galactomannans and glucomannans.. The sequence is that of Mannan endo-1,4-beta-mannosidase B (MANB) from Piromyces sp.